A 67-amino-acid chain; its full sequence is Large ribosomal subunit protein bL35 (67 aa).

This sequence belongs to the bacterial ribosomal protein bL35 family.

This is Large ribosomal subunit protein bL35 from Deinococcus geothermalis (strain DSM 11300 / CIP 105573 / AG-3a).